Reading from the N-terminus, the 191-residue chain is Cytochrome b-245 light chain (191 aa).

The Cytoplasmic portion of the chain corresponds to 2–7 (GQIEWA). Residues 8 to 30 (MWANEQALASGLILITGGIVATA) traverse the membrane as a helical segment. At 31-35 (GQFTQ) the chain is on the extracellular side. Residues 36-53 (WYLGAYSIAAGVLVCLLE) form a helical membrane-spanning segment. The Cytoplasmic portion of the chain corresponds to 54–69 (YPRGKRSKGSTMERCG). The stretch at 70–80 (QKYLTRVVKLF) is an intramembrane region. The Cytoplasmic portion of the chain corresponds to 81-86 (GPLTRN). A helical transmembrane segment spans residues 87-104 (YYIRAFLHLGLAVPAGFL). Leu105 is a topological domain (extracellular). Residues 106 to 126 (ATILGTACLAIASGIYLLAAI) traverse the membrane as a helical segment. Residues 127 to 191 (RGEQWSPIEP…NPMPVNDEVV (65 aa)) are Cytoplasmic-facing. The interval 134-191 (IEPKPKERPQIGGTIKQPPSNPPPRPPAEARKKLSEEAAGVPTGGPQENPMPVNDEVV) is disordered. Thr147 carries the phosphothreonine modification. Lys149 participates in a covalent cross-link: Glycyl lysine isopeptide (Lys-Gly) (interchain with G-Cter in ubiquitin). A Phosphoserine modification is found at Ser168.

It belongs to the p22phox family. In terms of assembly, component of the phagocyte NADPH oxidase core complex/cytochrome b558 complex, composed of CYBB (heavy chain (beta)) and CYBA (light chain (alpha)). Component of the phagocyte NADPH oxidase complex composed of an obligatory core heterodimer formed by the membrane proteins CYBA and CYBB and the cytosolic regulatory subunits NCF1/p47-phox, NCF2/p67-phox, NCF4/p40-phox and the small GTPase RAC1 or RAC2. Interacts with NCF1 (via SH3 domain). Interacts with SH3PXD2A. Interacts with DUOX1, DUOX2 and TPO. Interacts with NOX4; this interaction mediates superoxide generation. Interacts with calprotectin (S100A8/9). Interacts with GBP7. Interacts with NOXO1. Forms a heterodimer with NOX3 and is essential for activity and cell membrane localization of NOX3. Interacts with NOX1. In terms of processing, phosphorylation at Thr-147 enhances NADPH oxidase activity by promoting NCF1/p47-phox binding. Post-translationally, ubiquitinated at Lys-149 likely by RNF145.

It is found in the cell membrane. In terms of biological role, subunit of NADPH oxidase complexes that is required for the NADPH oxidase activity that generates, in various cell types, superoxide from molecular oxygen utilizing NADPH as an electron donor. Subunit of the phagocyte NADPH oxidase complex that mediates the transfer of electrons from cytosolic NADPH to O2 to produce the superoxide anion (O2(-)). In the activated complex, electrons are first transferred from NADPH to flavin adenine dinucleotide (FAD) and subsequently transferred via two heme molecules to molecular oxygen, producing superoxide through an outer-sphere reaction. Activation of the NADPH oxidase complex is initiated by the assembly of cytosolic subunits of the NADPH oxidase complex with the core NADPH oxidase complex to form a complex at the plasma membrane or phagosomal membrane. This activation process is initiated by phosphorylation dependent binding of the cytosolic NCF1/p47-phox subunit to the C-terminus of CYBA/p22-phox. Aassociates with NOX3 to form a functional NADPH oxidase constitutively generating superoxide. The chain is Cytochrome b-245 light chain from Bison bison (American bison).